We begin with the raw amino-acid sequence, 897 residues long: Macoilin (897 aa).

Transmembrane regions (helical) follow at residues 113–133, 157–177, 181–201, and 204–224; these read ICYL…YVWI, QSWP…FLRI, PILI…PVWP, and LNAF…TVSM. Composition is skewed to polar residues over residues 291 to 304 and 329 to 338; these read IQAA…SSKK and GNSGFNSTPP. The tract at residues 291-375 is disordered; sequence IQAASATPPT…DTSSSTIEDQ (85 aa). Residues 351-361 show a composition bias toward acidic residues; that stretch reads DMDDGDDSDDD. A helical membrane pass occupies residues 379-399; sequence GGISIIRFIFSSAAWLFSFVF. Over residues 403 to 413 the composition is skewed to polar residues; sequence TPSENSLSNQQ. 2 disordered regions span residues 403-535 and 724-770; these read TPSE…QEED and NGSS…SPVP. Residues 414-424 are compositionally biased toward acidic residues; sequence IDDDEDYEDGD. A compositionally biased stretch (polar residues) spans 432–451; that stretch reads TDSMTSTTKGRANTMPSTTR. 2 stretches are compositionally biased toward low complexity: residues 452-467 and 475-490; these read SQNN…QSNG and SHQN…SNGH. Residues 503–726 are a coiled coil; it reads DTNASNETDI…VQEFQIKNGS (224 aa). Basic and acidic residues predominate over residues 510 to 535; it reads TDIRSMSRELESLRSEISSRRSQEED. The span at 734-761 shows a compositional bias: polar residues; it reads ETLMNGRSSTEANNENDTTASDQSSPHQ.

Strong expression in many neurons, very weak expression is also detected in others tissues.

It localises to the rough endoplasmic reticulum membrane. Its subcellular location is the nucleus membrane. Functionally, plays a role in the regulation of neuronal activity. In AWA and AWC neurons, plays a role in regulating olfactory adaptation by controlling the forgetting sensory responses to odorants such as diacetyl and isoamyl alcohol. May play a role in regulating daf-7 expression in ASI neurons in response to bacterial small RNAs. In ASI neurons, promotes dauer formation in response to pheromones such as the ascarosides ascr#2 and ascr#3. The protein is Macoilin of Caenorhabditis elegans.